The primary structure comprises 1393 residues: DNA-directed RNA polymerase subunit beta' (1393 aa).

Residues Cys72, Cys74, Cys87, and Cys90 each contribute to the Zn(2+) site. Asp463, Asp465, and Asp467 together coordinate Mg(2+). 4 residues coordinate Zn(2+): Cys812, Cys887, Cys894, and Cys897.

Belongs to the RNA polymerase beta' chain family. As to quaternary structure, the RNAP catalytic core consists of 2 alpha, 1 beta, 1 beta' and 1 omega subunit. When a sigma factor is associated with the core the holoenzyme is formed, which can initiate transcription. Mg(2+) is required as a cofactor. Requires Zn(2+) as cofactor.

The catalysed reaction is RNA(n) + a ribonucleoside 5'-triphosphate = RNA(n+1) + diphosphate. In terms of biological role, DNA-dependent RNA polymerase catalyzes the transcription of DNA into RNA using the four ribonucleoside triphosphates as substrates. This chain is DNA-directed RNA polymerase subunit beta', found in Chlamydia pneumoniae (Chlamydophila pneumoniae).